Reading from the N-terminus, the 123-residue chain is DNA-directed RNA polymerase I subunit RPA12 (123 aa).

Positions 17, 20, 35, 38, 84, and 87 each coordinate Zn(2+). The C4-type zinc-finger motif lies at 17-38 (CPDCGSVLPLPGVQDTVICPRC). A TFIIS-type zinc finger spans residues 80 to 120 (VDRRCSRCGHEGMAYYTRQMRSADEGQTVFYTCINCKFQEK). The Hairpin signature appears at 103-104 (DE). Residues Cys112 and Cys115 each contribute to the Zn(2+) site.

This sequence belongs to the archaeal RpoM/eukaryotic RPA12/RPB9/RPC11 RNA polymerase family. In terms of assembly, component of the RNA polymerase I (Pol I) complex consisting of 13 subunits: a ten-subunit catalytic core composed of POLR1A/RPA1, POLR1B/RPA2, POLR1C/RPAC1, POLR1D/RPAC2, POLR1H/RPA12, POLR2E/RPABC1, POLR2F/RPABC2, POLR2H/RPABC3, POLR2K/RPABC4 and POLR2L/RPABC5; a mobile stalk subunit POLR1F/RPA43 protruding from the core and additional subunits homologous to general transcription factors POLR1E/RPA49 and POLR1G/RPA34. Part of Pol I pre-initiation complex (PIC), in which Pol I core assembles with RRN3 and promoter-bound UTBF and SL1/TIF-IB complex.

It localises to the nucleus. The protein localises to the nucleolus. Core component of RNA polymerase I (Pol I), a DNA-dependent RNA polymerase which synthesizes ribosomal RNA precursors using the four ribonucleoside triphosphates as substrates. Can mediate Pol I proofreading of the nascent RNA transcript. Anchors into the Pol I active site to monitor transcription fidelity and cleave mis-incorporated 5'-ribonucleotides. The protein is DNA-directed RNA polymerase I subunit RPA12 of Rattus norvegicus (Rat).